The primary structure comprises 211 residues: MEAQGSSHDISRLLCLGVKEDSEEQHGQYLGDVKAEAFFQAGEGRDEKGAQGQPGEGAVGTEGEGEELNGGEGHFGPGVPGPVGEGDKDGGTRASGMEEEQHEPVAEGTESVKSEDKQMPLRRPGSTQRRLAELERILLSSGSSSGGRSLIDGWISVCPECRNWFKIRRAAYRRNRRRRTPIPEHFRATSGCPACLGARWGVRCPFATPRF.

Residues phenylalanine 38–arginine 129 form a disordered region. 2 stretches are compositionally biased toward gly residues: residues glycine 52–glutamate 62 and glycine 70–glycine 84. The span at histidine 102 to methionine 119 shows a compositional bias: basic and acidic residues. The homeobox; atypical DNA-binding region spans methionine 119–arginine 176.

Highly expressed in placenta. Lower levels in testis, epididymis, ovary and skeletal muscle.

The protein resides in the nucleus. Its function is as follows. Transcription factor required for differentiation of embryonic stem cells (ESCs) into primordial germ cells. The polypeptide is Homeobox protein Rhox5 (Rhox5) (Rattus norvegicus (Rat)).